The chain runs to 335 residues: Glycerol-3-phosphate dehydrogenase [NAD(P)+] (335 aa).

NADPH is bound by residues Trp-11, Arg-30, and Lys-106. 3 residues coordinate sn-glycerol 3-phosphate: Lys-106, Gly-135, and Ser-137. Ala-139 contributes to the NADPH binding site. Positions 190, 243, 253, 254, and 255 each coordinate sn-glycerol 3-phosphate. Lys-190 acts as the Proton acceptor in catalysis. Residue Arg-254 participates in NADPH binding. 2 residues coordinate NADPH: Val-278 and Glu-280.

This sequence belongs to the NAD-dependent glycerol-3-phosphate dehydrogenase family.

The protein resides in the cytoplasm. It catalyses the reaction sn-glycerol 3-phosphate + NAD(+) = dihydroxyacetone phosphate + NADH + H(+). The catalysed reaction is sn-glycerol 3-phosphate + NADP(+) = dihydroxyacetone phosphate + NADPH + H(+). Its pathway is membrane lipid metabolism; glycerophospholipid metabolism. Its function is as follows. Catalyzes the reduction of the glycolytic intermediate dihydroxyacetone phosphate (DHAP) to sn-glycerol 3-phosphate (G3P), the key precursor for phospholipid synthesis. The protein is Glycerol-3-phosphate dehydrogenase [NAD(P)+] of Paucimonas lemoignei (Pseudomonas lemoignei).